We begin with the raw amino-acid sequence, 179 residues long: MSRVGKRIIQIPSGTEVKIDGSFFEVKGKLGSLSRLFSPFVNIKHENNQISVERLNELKPTKQLHGTTNALIANMVKGVSEGFKKELKIEGVGYKATLKGQNLELAAGYSHPVSLVIPKDLKVEVPKPVNIIISGIDKQVVGEFAAKVRGVRPPSVYSGKGIQYKDEKLRRKEGKKASK.

The protein belongs to the universal ribosomal protein uL6 family. Part of the 50S ribosomal subunit.

Its function is as follows. This protein binds to the 23S rRNA, and is important in its secondary structure. It is located near the subunit interface in the base of the L7/L12 stalk, and near the tRNA binding site of the peptidyltransferase center. The protein is Large ribosomal subunit protein uL6 of Mycoplasmopsis pulmonis (strain UAB CTIP) (Mycoplasma pulmonis).